A 219-amino-acid chain; its full sequence is Probable GTP-binding protein EngB (219 aa).

The 175-residue stretch at 31 to 205 (VGVEIAFAGR…LSILNEWCHP (175 aa)) folds into the EngB-type G domain. GTP is bound by residues 39 to 46 (GRSNAGKS), 66 to 70 (GRTQL), 84 to 87 (DLPG), 151 to 154 (TKSD), and 184 to 186 (FSA). Ser-46 and Thr-68 together coordinate Mg(2+).

Belongs to the TRAFAC class TrmE-Era-EngA-EngB-Septin-like GTPase superfamily. EngB GTPase family. Mg(2+) is required as a cofactor.

Its function is as follows. Necessary for normal cell division and for the maintenance of normal septation. This is Probable GTP-binding protein EngB from Shewanella putrefaciens (strain CN-32 / ATCC BAA-453).